The sequence spans 552 residues: Antibiotic resistance protein MAB_2355c (552 aa).

ABC transporter domains follow at residues 4-270 and 332-552; these read VQLD…RRWD and AKRA…PQWV. Residues 37 to 44 and 364 to 371 each bind ATP; these read GPNGTGKT and GGNGTGKS.

The protein belongs to the ABC transporter superfamily. ABCF family.

The catalysed reaction is ATP + H2O = ADP + phosphate + H(+). With respect to regulation, the ATPase activity can be inhibited by ribosome-targeting antibiotics. Exhibits ATP hydrolysis activity and contributes to macrolide resistance by ribosome protection. Can also hydrolyze GTP, TTP and CTP but to a lesser extent than ATP. In vitro, rescues the transcription and translation activities affected by macrolides. Increased expression correlates with increased resistance to clarithromycin, one of the main drugs used to treat M.abscessus. The protein is Antibiotic resistance protein MAB_2355c of Mycobacteroides abscessus (strain ATCC 19977 / DSM 44196 / CCUG 20993 / CIP 104536 / JCM 13569 / NCTC 13031 / TMC 1543 / L948) (Mycobacterium abscessus).